Reading from the N-terminus, the 144-residue chain is TSC22 domain family protein 1 (144 aa).

The interval 77–98 (LKEQIKELIEKNSQLEQENNLL) is leucine-zipper. The segment at 109 to 144 (QFQAQLQTGSPPATTQPQGSTQPPAQPASQGSGPTA) is disordered.

Belongs to the TSC-22/Dip/Bun family. Forms homodimers. Forms a heterodimer with TSC22D4/THG1. Interacts with histone H1-2. Interacts with GNL3.

It is found in the cytoplasm. The protein resides in the nucleus. It localises to the mitochondrion. In terms of biological role, transcriptional repressor. Plays a role in the repression of hematopoietic precursor cell growth. Promotes IL2 deprivation-induced apoptosis in T-lymphocytes, via repression of TSC22D3/GILZ transcription and activation of the caspase cascade. Positively regulates cell death in response to TGFB3 during mammary gland involution. This is TSC22 domain family protein 1 from Bathyergus suillus (Cape dune mole rat).